The primary structure comprises 532 residues: Omega-hydroxyceramide transacylase (532 aa).

One can recognise a PNPLA domain in the interval 16–185 (ISFSGSGFLS…TGMQPCAFWT (170 aa)). The GXSXG signature appears at 51–55 (GTSAG). The active-site Nucleophile is Ser53. Asp172 acts as the Proton acceptor in catalysis. A DGA/G motif is present at residues 172–174 (DGG). Disordered stretches follow at residues 290-457 (PERS…ELGQ) and 489-532 (VTES…SKVQ). Positions 310–322 (PHKEWVPKGDGRG) are enriched in basic and acidic residues. 2 stretches are compositionally biased toward low complexity: residues 380 to 389 (PPSSTPGSSL) and 397 to 411 (SPLS…SGSP). Basic residues predominate over residues 517–532 (GFPRHSGSKKPSSKVQ).

In terms of tissue distribution, expressed in the digestive system. Expressed in the epidermis of skin keratinocytes. Strongly expressed in the granular layer. Expressed in the upper epidermis and eccrine sweat glands of the dermis and in the region of keratin filament bundles, which is more pronounced in upper epidermal layers and in the lower cornified layers.

The protein resides in the cytoplasm. The enzyme catalyses an N-(omega-hydroxy-ultra-long chain fatty acyl)-sphingoid base + a (9Z,12Z)-octadecadienoyl-containing triacyl-sn-glycerol = an N-[omega-(9Z,12Z-octadecadienoyloxy)-O-ultra-long chain fatty acyl]-sphingoid base + a diacylglycerol. It catalyses the reaction an N-(omega-hydroxy-ultra-long chain fatty acyl)-sphing-4-enine + a (9Z,12Z)-octadecadienoyl-containing triacyl-sn-glycerol = an N-(omega-(9Z,12Z-octadecadienoyloxy)-ultra-long chain fatty acyl)-sphing-4-enine + a diacylglycerol. It carries out the reaction N-(30-hydroxytriacontanoyl)-sphing-4-enine + 1,2,3-tri-(9Z,12Z)-octadecadienoylglycerol = N-[30-(9Z,12Z-octadecadienoyloxy)-triacontanoyl]-sphing-4-enine + di-(9Z,12Z)-octadecadienoylglycerol. The catalysed reaction is N-(28-hydroxyoctacosanoyl)-sphing-4-enine + a (9Z,12Z)-octadecadienoyl-containing triacyl-sn-glycerol = N-(28-(9Z,12Z-octadecadienoyloxy)-octacosanoyl)-sphing-4-enine + a diacylglycerol. The enzyme catalyses N-(32-hydroxydotriacontanoyl)-sphing-4-enine + a (9Z,12Z)-octadecadienoyl-containing triacyl-sn-glycerol = N-(32-(9Z,12Z-octadecadienoyloxy)-dotricontanoyl)-sphing-4-enine + a diacylglycerol. It catalyses the reaction N-(32-hydroxydotriacontenoyl)-sphing-4-enine + a (9Z,12Z)-octadecadienoyl-containing triacyl-sn-glycerol = an N-(32-(9Z,12Z-octadecadienoyloxy)-dotriacontenoyl)-sphing-4-enine + a diacylglycerol. It carries out the reaction an N-(34-hydroxytetratriacontenoyl)-sphing-4-enine + a (9Z,12Z)-octadecadienoyl-containing triacyl-sn-glycerol = an N-(34-(9Z,12Z-octadecadienoyloxy)-tetratriacontenoyl)-sphing-4-enine + a diacylglycerol. The catalysed reaction is an N-(34-hydroxytetratriacontadienoyl)-sphing-4-enine + a (9Z,12Z)-octadecadienoyl-containing triacyl-sn-glycerol = an N-(34-(9Z,12Z-octadecadienoyloxy)-tetratriacontadienoyl)-sphing-4-enine + a diacylglycerol. The enzyme catalyses an N-(36-hydroxyhexatriacontenoyl)-sphing-4-enine + a (9Z,12Z)-octadecadienoyl-containing triacyl-sn-glycerol = an N-(36-(9Z,12Z-octadecadienoyloxy)-hexatriacontenoyl)-sphing-4-enine + a diacylglycerol. It catalyses the reaction an N-(36-hydroxyhexatriacontadienoyl)-sphing-4-enine + a (9Z,12Z)-octadecadienoyl-containing triacyl-sn-glycerol = an N-(36-(9Z,12Z-octadecadienoyloxy)-hexatriacontadienoyl)-sphing-4-enine + a diacylglycerol. It carries out the reaction an N-(38-hydroxyoctatriacontenoyl)-sphing-4-enine + a (9Z,12Z)-octadecadienoyl-containing triacyl-sn-glycerol = an N-(38-(9Z,12Z-octadecadienoyloxy)-octatriacontenoyl)-sphing-4-enine + a diacylglycerol. Functionally, omega-hydroxyceramide transacylase involved in the synthesis of omega-O-acylceramides (esterified omega-hydroxyacyl-sphingosine; EOS), which are extremely hydrophobic lipids involved in skin barrier formation. Catalyzes the last step of the synthesis of omega-O-acylceramides by transferring linoleic acid from triglycerides to an omega-hydroxyceramide. Omega-O-acylceramides, are required for the biogenesis of lipid lamellae in the stratum corneum and the formation of the cornified lipid envelope which are essential for the epidermis barrier function. These lipids also play a role in keratinocyte differentiation. May also act on omega-hydroxylated ultra-long chain fatty acids (omega-OH ULCFA) and acylglucosylceramides (GlcEOS). The polypeptide is Omega-hydroxyceramide transacylase (Homo sapiens (Human)).